We begin with the raw amino-acid sequence, 74 residues long: Small ribosomal subunit protein bS18 (74 aa).

The protein belongs to the bacterial ribosomal protein bS18 family. In terms of assembly, part of the 30S ribosomal subunit. Forms a tight heterodimer with protein bS6.

In terms of biological role, binds as a heterodimer with protein bS6 to the central domain of the 16S rRNA, where it helps stabilize the platform of the 30S subunit. The sequence is that of Small ribosomal subunit protein bS18 from Coprothermobacter proteolyticus (strain ATCC 35245 / DSM 5265 / OCM 4 / BT).